The following is a 270-amino-acid chain: Molybdenum-pterin-binding protein MopB (270 aa).

Mop domains follow at residues 131–197 and 203–269; these read RTSA…LLAG and RLSV…ILAL.

This sequence belongs to the ModE family.

The protein is Molybdenum-pterin-binding protein MopB (mopB) of Rhodobacter capsulatus (Rhodopseudomonas capsulata).